Reading from the N-terminus, the 374-residue chain is Serine/threonine-protein kinase-transforming protein mos (374 aa).

The region spanning 94 to 370 (VCLMHRLGSG…LLQRDLKAFR (277 aa)) is the Protein kinase domain. Residues 100 to 108 (LGSGGFGSV) and K121 each bind ATP. The Proton acceptor role is filled by D229.

It belongs to the protein kinase superfamily. Ser/Thr protein kinase family.

The catalysed reaction is L-seryl-[protein] + ATP = O-phospho-L-seryl-[protein] + ADP + H(+). It carries out the reaction L-threonyl-[protein] + ATP = O-phospho-L-threonyl-[protein] + ADP + H(+). The polypeptide is Serine/threonine-protein kinase-transforming protein mos (V-MOS) (Mus musculus (Mouse)).